The following is a 483-amino-acid chain: Probable apyrase 3 (483 aa).

Residues 1 to 29 (MTPETDALKVQILPKHQSLPYTVTKAKSK) lie on the Cytoplasmic side of the membrane. A helical; Signal-anchor for type II membrane protein transmembrane segment spans residues 30–50 (SLILLVVVSVTITLGLLLYVF). Residues 51-483 (NSNSVISSGS…NGKSRKYLGF (433 aa)) lie on the Extracellular side of the membrane. An ATP-binding site is contributed by 72–82 (VLIDAGSSGTR). The active-site Proton acceptor is glutamate 195. 219 to 229 (GIVELGGASAQ) lines the ATP pocket. N-linked (GlcNAc...) asparagine glycans are attached at residues asparagine 250, asparagine 281, asparagine 305, and asparagine 326.

It belongs to the GDA1/CD39 NTPase family. Ca(2+) serves as cofactor. Expressed in the initiation zone of lateral root and in the lateral root tip, the adaxial junction of lateral shoots with the stems, and in the abscission zone of flower organs. Not expressed in the rosette leaves.

Its subcellular location is the membrane. It catalyses the reaction a ribonucleoside 5'-triphosphate + 2 H2O = a ribonucleoside 5'-phosphate + 2 phosphate + 2 H(+). Its function is as follows. Catalyzes the hydrolysis of phosphoanhydride bonds of nucleoside tri- and di-phosphates. This chain is Probable apyrase 3 (APY3), found in Arabidopsis thaliana (Mouse-ear cress).